Consider the following 141-residue polypeptide: Large ribosomal subunit protein uL11 (141 aa).

Belongs to the universal ribosomal protein uL11 family. Part of the ribosomal stalk of the 50S ribosomal subunit. Interacts with L10 and the large rRNA to form the base of the stalk. L10 forms an elongated spine to which L12 dimers bind in a sequential fashion forming a multimeric L10(L12)X complex. Post-translationally, one or more lysine residues are methylated.

Functionally, forms part of the ribosomal stalk which helps the ribosome interact with GTP-bound translation factors. This Picosynechococcus sp. (strain ATCC 27264 / PCC 7002 / PR-6) (Agmenellum quadruplicatum) protein is Large ribosomal subunit protein uL11.